The following is a 184-amino-acid chain: Ras-related protein Rap-1b (184 aa).

A GTP-binding site is contributed by 10–18; that stretch reads GSGGVGKSA. The tract at residues 25–67 is interaction with KRIT1; the sequence is QGIFVEKYDPTIEDSYRKQVEVDAQQCMLEILDTAGTEQFTAM. The short motif at 32–40 is the Effector region element; it reads YDPTIEDSY. Residues 57–61, 116–119, and 147–149 each bind GTP; these read DTAGT, NKCD, and SAK. S179 is modified (phosphoserine; by PKA). The residue at position 181 (C181) is a Cysteine methyl ester. Residue C181 is the site of S-geranylgeranyl cysteine attachment. Residues 182-184 constitute a propeptide, removed in mature form; it reads QLL.

As to quaternary structure, heterodimer with RAP1GAP. Interacts with EPAC2. Interacts with SGSM1. Interacts with SGSM2. Interacts with SGSM3. Interacts with KRIT1. Interacts with RAP1GDS1.

The protein localises to the cell membrane. It localises to the cytoplasm. The protein resides in the cytosol. It is found in the cell junction. It catalyses the reaction GTP + H2O = GDP + phosphate + H(+). Activated by guanine nucleotide-exchange factor (GEF) EPAC2 in a cAMP-dependent manner. Its function is as follows. GTP-binding protein that possesses intrinsic GTPase activity. Contributes to the polarizing activity of KRIT1 and CDH5 in the establishment and maintenance of correct endothelial cell polarity and vascular lumen. Required for the localization of phosphorylated PRKCZ, PARD3 and TIAM1 to the cell junction. Plays a role in the establishment of basal endothelial barrier function. The polypeptide is Ras-related protein Rap-1b (RAP1B) (Bos taurus (Bovine)).